The chain runs to 615 residues: Aldehyde oxidase GLOX1 (615 aa).

The N-terminal stretch at 1-25 is a signal peptide; it reads MKKSTRLLWLLSIIVLVAAVSKAVA. N-linked (GlcNAc...) asparagine glycosylation occurs at Asn35. The segment at 70–89 is disordered; that stretch reads PPKAGKGKGKGKGRGTVAAG. Basic residues predominate over residues 72 to 82; it reads KAGKGKGKGKG. 2 N-linked (GlcNAc...) asparagine glycosylation sites follow: Asn187 and Asn297.

Its subcellular location is the secreted. The catalysed reaction is an aldehyde + O2 + H2O = a carboxylate + H2O2 + H(+). Its function is as follows. Catalyzes the oxidation of aldehydes to the corresponding carboxylate by coupling the reaction to the reduction of dioxygen to hydrogen peroxide. Substrates include glyoxal and other aldehydes. May be regulated by the transcription factor MYB80 during anther development and play a role in tapetum and pollen development. The chain is Aldehyde oxidase GLOX1 from Arabidopsis thaliana (Mouse-ear cress).